Here is a 192-residue protein sequence, read N- to C-terminus: Shikimate kinase (192 aa).

15–20 (GAGKTT) contributes to the ATP binding site. A Mg(2+)-binding site is contributed by Thr19. The substrate site is built by Asp37, Arg61, and Gly83. Arg121 contacts ATP. Position 140 (Arg140) interacts with substrate.

This sequence belongs to the shikimate kinase family. In terms of assembly, monomer. It depends on Mg(2+) as a cofactor.

The protein localises to the cytoplasm. The enzyme catalyses shikimate + ATP = 3-phosphoshikimate + ADP + H(+). The protein operates within metabolic intermediate biosynthesis; chorismate biosynthesis; chorismate from D-erythrose 4-phosphate and phosphoenolpyruvate: step 5/7. Functionally, catalyzes the specific phosphorylation of the 3-hydroxyl group of shikimic acid using ATP as a cosubstrate. The chain is Shikimate kinase from Cupriavidus pinatubonensis (strain JMP 134 / LMG 1197) (Cupriavidus necator (strain JMP 134)).